The sequence spans 440 residues: Thymidine phosphorylase (440 aa).

It belongs to the thymidine/pyrimidine-nucleoside phosphorylase family. Homodimer.

It catalyses the reaction thymidine + phosphate = 2-deoxy-alpha-D-ribose 1-phosphate + thymine. It participates in pyrimidine metabolism; dTMP biosynthesis via salvage pathway; dTMP from thymine: step 1/2. Its function is as follows. The enzymes which catalyze the reversible phosphorolysis of pyrimidine nucleosides are involved in the degradation of these compounds and in their utilization as carbon and energy sources, or in the rescue of pyrimidine bases for nucleotide synthesis. The sequence is that of Thymidine phosphorylase from Erwinia tasmaniensis (strain DSM 17950 / CFBP 7177 / CIP 109463 / NCPPB 4357 / Et1/99).